A 173-amino-acid chain; its full sequence is Ribosome maturation factor RimP (173 aa).

This sequence belongs to the RimP family.

It is found in the cytoplasm. Required for maturation of 30S ribosomal subunits. This chain is Ribosome maturation factor RimP, found in Pelodictyon phaeoclathratiforme (strain DSM 5477 / BU-1).